The primary structure comprises 215 residues: 23.2 kDa heat shock protein (215 aa).

A signal peptide spans 1–27; that stretch reads MASMRTAAAAAMLACIAVVLASTAADG. The sHSP domain occupies 69 to 189; that stretch reads DVAMLSMARV…GPRVVGIASA (121 aa). A disordered region spans residues 183 to 215; that stretch reads VVGIASAGGDDGGKKSIGGAGEGQNQQAKKVEL. Positions 205–215 are enriched in polar residues; it reads GQNQQAKKVEL.

This sequence belongs to the small heat shock protein (HSP20) family. May form oligomeric structures.

It localises to the endoplasmic reticulum. The chain is 23.2 kDa heat shock protein (HSP23.2) from Oryza sativa subsp. japonica (Rice).